We begin with the raw amino-acid sequence, 162 residues long: Peptidyl-prolyl cis-trans isomerase (162 aa).

The PPIase cyclophilin-type domain maps to 16 to 162 (KTAYATIKTN…IESVVFSPSL (147 aa)).

The protein belongs to the cyclophilin-type PPIase family.

The enzyme catalyses [protein]-peptidylproline (omega=180) = [protein]-peptidylproline (omega=0). Functionally, PPIases accelerate the folding of proteins. It catalyzes the cis-trans isomerization of proline imidic peptide bonds in oligopeptides. The polypeptide is Peptidyl-prolyl cis-trans isomerase (ppiA) (Helicobacter pylori (strain J99 / ATCC 700824) (Campylobacter pylori J99)).